The following is a 148-amino-acid chain: UPF0756 membrane protein YeaL (148 aa).

4 consecutive transmembrane segments (helical) span residues 14-34, 51-71, 86-106, and 121-141; these read ALGF…LIIV, LSIG…SGTL, LVAI…VTLM, and VLGV…AGLV.

The protein belongs to the UPF0756 family.

It localises to the cell membrane. This chain is UPF0756 membrane protein YeaL, found in Shigella boydii serotype 18 (strain CDC 3083-94 / BS512).